The following is a 437-amino-acid chain: GTPase Der (437 aa).

EngA-type G domains are found at residues 3-167 (NLVA…NKET) and 176-352 (PRFA…ENRT). GTP is bound by residues 9-16 (GRPNVGKS), 56-60 (DTGGW), 119-122 (NKTD), 182-189 (GRPNAGKS), 229-233 (DTAGI), and 294-297 (NKWD). The KH-like domain maps to 353–437 (TKIPTARLNE…TPINIYIRQK (85 aa)).

The protein belongs to the TRAFAC class TrmE-Era-EngA-EngB-Septin-like GTPase superfamily. EngA (Der) GTPase family. Associates with the 50S ribosomal subunit.

Its function is as follows. GTPase that plays an essential role in the late steps of ribosome biogenesis. This Bacteroides thetaiotaomicron (strain ATCC 29148 / DSM 2079 / JCM 5827 / CCUG 10774 / NCTC 10582 / VPI-5482 / E50) protein is GTPase Der.